The primary structure comprises 132 residues: uncharacterized protein (132 aa).

Residues 1 to 69 enclose the HTH merR-type domain; that stretch reads MNIGEAAKKS…LDEVGKLLTL (69 aa). Positions 4 to 23 form a DNA-binding region, H-T-H motif; that stretch reads GEAAKKSGLTPKMIRYYESI.

The protein resides in the cytoplasm. This is an uncharacterized protein from Pseudomonas aeruginosa (strain ATCC 15692 / DSM 22644 / CIP 104116 / JCM 14847 / LMG 12228 / 1C / PRS 101 / PAO1).